The chain runs to 200 residues: Inner membrane-spanning protein YciB (200 aa).

The next 6 membrane-spanning stretches (helical) occupy residues 7 to 27 (HPLF…VVNA), 32 to 52 (FAAT…SYVV), 56 to 76 (VPLM…LTLV), 93 to 113 (LFAA…AIMF), 126 to 146 (ILTF…EIIW), and 153 to 173 (FWVG…AIAQ).

It belongs to the YciB family.

Its subcellular location is the cell inner membrane. Functionally, plays a role in cell envelope biogenesis, maintenance of cell envelope integrity and membrane homeostasis. This is Inner membrane-spanning protein YciB from Bradyrhizobium sp. (strain BTAi1 / ATCC BAA-1182).